The chain runs to 338 residues: tRNA N6-adenosine threonylcarbamoyltransferase (338 aa).

The Fe cation site is built by His-111 and His-115. Residues 134–138, Asp-167, Gly-180, and Asn-272 each bind substrate; that span reads LVSGG. Asp-300 contacts Fe cation.

Belongs to the KAE1 / TsaD family. The cofactor is Fe(2+).

Its subcellular location is the cytoplasm. It carries out the reaction L-threonylcarbamoyladenylate + adenosine(37) in tRNA = N(6)-L-threonylcarbamoyladenosine(37) in tRNA + AMP + H(+). In terms of biological role, required for the formation of a threonylcarbamoyl group on adenosine at position 37 (t(6)A37) in tRNAs that read codons beginning with adenine. Is involved in the transfer of the threonylcarbamoyl moiety of threonylcarbamoyl-AMP (TC-AMP) to the N6 group of A37, together with TsaE and TsaB. TsaD likely plays a direct catalytic role in this reaction. The protein is tRNA N6-adenosine threonylcarbamoyltransferase of Shewanella sp. (strain ANA-3).